We begin with the raw amino-acid sequence, 421 residues long: UDP-N-acetylglucosamine 1-carboxyvinyltransferase 1 (421 aa).

Residue 22–23 (KN) coordinates phosphoenolpyruvate. Arg-95 is a binding site for UDP-N-acetyl-alpha-D-glucosamine. Residue Cys-119 is the Proton donor of the active site. Position 119 is a 2-(S-cysteinyl)pyruvic acid O-phosphothioketal (Cys-119). UDP-N-acetyl-alpha-D-glucosamine contacts are provided by residues 124-128 (RPIEQ), Asp-308, and Val-330.

It belongs to the EPSP synthase family. MurA subfamily.

The protein resides in the cytoplasm. The catalysed reaction is phosphoenolpyruvate + UDP-N-acetyl-alpha-D-glucosamine = UDP-N-acetyl-3-O-(1-carboxyvinyl)-alpha-D-glucosamine + phosphate. It functions in the pathway cell wall biogenesis; peptidoglycan biosynthesis. In terms of biological role, cell wall formation. Adds enolpyruvyl to UDP-N-acetylglucosamine. The chain is UDP-N-acetylglucosamine 1-carboxyvinyltransferase 1 from Staphylococcus aureus (strain MRSA252).